Here is a 191-residue protein sequence, read N- to C-terminus: Cytochrome c oxidase subunit 6b-1 (191 aa).

The segment covering 1–14 has biased composition (polar residues); sequence MADAVNAQTPSLSE. Residues 1–126 form a disordered region; sequence MADAVNAQTP…IKLETAPADF (126 aa). At A2 the chain carries N-acetylalanine. 2 stretches are compositionally biased toward basic and acidic residues: residues 16 to 37 and 45 to 56; these read YHLE…KEVA and EEVKTEQAKEES. Residues 72–98 show a composition bias toward low complexity; that stretch reads APESTEVASEAPAAAEDNAEETPAAAE. Over residues 99-114 the composition is skewed to acidic residues; that stretch reads ENNDENASEEVAEETP. One can recognise a CHCH domain in the interval 134 to 177; it reads TRHCFTRYVEYHRCVAAKGDDAPECDKFAKFYRSLCPSEWVDRW. The Cx9C motif signature appears at 137–147; that stretch reads CFTRYVEYHRC. 2 disulfides stabilise this stretch: C137–C169 and C147–C158. The short motif at 158-169 is the Cx10C motif element; that stretch reads CDKFAKFYRSLC.

The protein belongs to the cytochrome c oxidase subunit 6B (TC 3.D.4.8) family. Expressed in the whole plant.

The protein resides in the mitochondrion. This protein is one of the nuclear-coded polypeptide chains of cytochrome c oxidase, the terminal oxidase in mitochondrial electron transport. This protein may be one of the heme-binding subunits of the oxidase. In Arabidopsis thaliana (Mouse-ear cress), this protein is Cytochrome c oxidase subunit 6b-1 (COX6B-1).